Consider the following 291-residue polypeptide: Transmembrane protein 41B (291 aa).

Residues 1 to 11 (MAKGRVADRSP) are compositionally biased toward basic and acidic residues. The segment at 1-43 (MAKGRVADRSPTEMLHSTPAGDRAVRTQGSAAPGSKDHLNEKP) is disordered. Threonine 18 carries the post-translational modification Phosphothreonine. Serine 35 bears the Phosphoserine mark. Helical transmembrane passes span 52-72 (TSLL…FLVY), 109-129 (FYVQ…TFAI), 147-169 (LALF…LSYL), 197-217 (LINY…FINI), 225-245 (PLKV…FVAI), and 262-282 (SWSS…PAIF). The interval 140–251 (GFLYPFPLAL…FVAIKAGTTL (112 aa)) is VTT domain; required for its function in autophagy.

The protein belongs to the TMEM41 family. As to quaternary structure, interacts with VMP1. Interacts with COPA, COPB1, VDAC1 and ERLIN2. Interacts with ATG2A. Interacts with SURF4. As to expression, expressed in brain, spinal cord, kidney and first lumbar dorsal root ganglia during postnatal development. Expressed in motor neurons and proprioceptive neurons.

The protein localises to the endoplasmic reticulum membrane. Its subcellular location is the endomembrane system. It carries out the reaction a 1,2-diacyl-sn-glycero-3-phospho-L-serine(in) = a 1,2-diacyl-sn-glycero-3-phospho-L-serine(out). It catalyses the reaction cholesterol(in) = cholesterol(out). The enzyme catalyses a 1,2-diacyl-sn-glycero-3-phosphocholine(in) = a 1,2-diacyl-sn-glycero-3-phosphocholine(out). The catalysed reaction is a 1,2-diacyl-sn-glycero-3-phosphoethanolamine(in) = a 1,2-diacyl-sn-glycero-3-phosphoethanolamine(out). Phospholipid scramblase involved in lipid homeostasis and membrane dynamics processes. Has phospholipid scramblase activity toward cholesterol and phosphatidylserine, as well as phosphatidylethanolamine and phosphatidylcholine. Required for autophagosome formation: participates in early stages of autophagosome biogenesis at the endoplasmic reticulum (ER) membrane by reequilibrating the leaflets of the ER as lipids are extracted by ATG2 (ATG2A or ATG2B) to mediate autophagosome assembly. In addition to autophagy, involved in other processes in which phospholipid scramblase activity is required. Required for normal motor neuron development. In Mus musculus (Mouse), this protein is Transmembrane protein 41B.